Reading from the N-terminus, the 521-residue chain is Potassium/proton antiporter CemA (521 aa).

The next 5 membrane-spanning stretches (helical) occupy residues 68–88 (FVFI…LLNI), 294–314 (ALAS…ISFP), 399–419 (ILHL…FISG), 446–466 (ILLL…EILI), and 481–501 (IISC…KYWI).

This sequence belongs to the CemA family.

The protein localises to the plastid. Its subcellular location is the chloroplast inner membrane. The enzyme catalyses K(+)(in) + H(+)(out) = K(+)(out) + H(+)(in). In terms of biological role, contributes to K(+)/H(+) antiport activity by supporting proton efflux to control proton extrusion and homeostasis in chloroplasts in a light-dependent manner to modulate photosynthesis. Prevents excessive induction of non-photochemical quenching (NPQ) under continuous-light conditions. Indirectly promotes efficient inorganic carbon uptake into chloroplasts. In Huperzia lucidula (Shining clubmoss), this protein is Potassium/proton antiporter CemA.